A 931-amino-acid polypeptide reads, in one-letter code: Elicitor of plant defense protein 1 (931 aa).

Positions 13–32 (NYNSVIPPPEPLNTDPDMHP) are disordered. The 259-residue stretch at 19–277 (PPPEPLNTDP…NLCTEAFNPL (259 aa)) folds into the uDENN domain. The 133-residue stretch at 301–433 (EIPGSRSIDL…ARRKLMSLLQ (133 aa)) folds into the cDENN domain. Positions 435 to 799 (AAPHKLRYGV…DREMQPANNA (365 aa)) constitute a dDENN domain. 2 disordered regions span residues 478-552 (LGKW…SRSD) and 566-586 (SGHFGEEKMRRSSSFGIDKHP). Residues 521-537 (TSKSGKTSPQSSVSPVS) show a composition bias toward polar residues. Residues 566–575 (SGHFGEEKMR) are compositionally biased toward basic and acidic residues. The segment at 666–714 (GHCFNWIPKDNTSICNICNDHAEGDGIYKCTGCKIFSHGRCLGHASLVC) adopts a Phorbol-ester/DAG-type zinc-finger fold.

Belongs to the EPD1 elicitor family.

The protein resides in the secreted. It is found in the host cell. In terms of biological role, acts as an elicitor that triggers cell death and defense responses in the host plants. This chain is Elicitor of plant defense protein 1, found in Fusarium odoratissimum (strain NRRL 54006).